Consider the following 378-residue polypeptide: UPF0754 membrane protein BT9727_0767 (378 aa).

2 helical membrane passes run Met1–Thr21 and Tyr357–Leu377.

The protein belongs to the UPF0754 family.

The protein localises to the cell membrane. The chain is UPF0754 membrane protein BT9727_0767 from Bacillus thuringiensis subsp. konkukian (strain 97-27).